The primary structure comprises 129 residues: Phosphoribosyl-AMP cyclohydrolase (129 aa).

A Mg(2+)-binding site is contributed by Asp77. Zn(2+) is bound at residue Cys78. Residues Asp79 and Asp81 each coordinate Mg(2+). 2 residues coordinate Zn(2+): Cys94 and Cys101.

It belongs to the PRA-CH family. Homodimer. Mg(2+) serves as cofactor. Requires Zn(2+) as cofactor.

It is found in the cytoplasm. The enzyme catalyses 1-(5-phospho-beta-D-ribosyl)-5'-AMP + H2O = 1-(5-phospho-beta-D-ribosyl)-5-[(5-phospho-beta-D-ribosylamino)methylideneamino]imidazole-4-carboxamide. Its pathway is amino-acid biosynthesis; L-histidine biosynthesis; L-histidine from 5-phospho-alpha-D-ribose 1-diphosphate: step 3/9. Its function is as follows. Catalyzes the hydrolysis of the adenine ring of phosphoribosyl-AMP. The chain is Phosphoribosyl-AMP cyclohydrolase from Methanosphaera stadtmanae (strain ATCC 43021 / DSM 3091 / JCM 11832 / MCB-3).